Here is a 574-residue protein sequence, read N- to C-terminus: Frizzled and smoothened-like protein G (574 aa).

An N-terminal signal peptide occupies residues 1–19 (MKSIIFITFFIFFLKKLNG). Residues 20-246 (LPNGYGVGLV…EKWNQIENLS (227 aa)) lie on the Extracellular side of the membrane. The 152-residue stretch at 30–181 (DPNGQCMNYI…GLYEVPCFNP (152 aa)) folds into the FZ domain. Cystine bridges form between cysteine 35–cysteine 109, cysteine 48–cysteine 102, cysteine 91–cysteine 138, and cysteine 127–cysteine 178. Residues asparagine 119, asparagine 161, asparagine 187, asparagine 206, asparagine 233, and asparagine 244 are each glycosylated (N-linked (GlcNAc...) asparagine). Residues 247-267 (KVLSTISFVCSIYNILSFGIL) form a helical membrane-spanning segment. Topologically, residues 268-273 (KKKKTK) are cytoplasmic. A helical transmembrane segment spans residues 274–294 (YTICISALSASVALINLGDII). The Extracellular portion of the chain corresponds to 295-324 (KIGVGYEKVLCPEPGRFATQVDDPLCGLTA). Residues 325 to 345 (ALFHVGICSTVLWTTTMAIYL) form a helical membrane-spanning segment. The Cytoplasmic portion of the chain corresponds to 346 to 358 (YSAIKNIKLFKFR). The chain crosses the membrane as a helical span at residues 359–379 (YFIIFNTGFSLTSLIIAASAS). Residues 380–401 (KFEAGTGSIECWIRDRWYSICL) lie on the Extracellular side of the membrane. Residues 402–422 (FWLPCGICLLIGTICIASVIV) traverse the membrane as a helical segment. The Cytoplasmic segment spans residues 423-445 (EIYKVSKNIKLSESETIMRQIKP). Residues 446–466 (IISVILVSGSFTYLFIIFFDI) traverse the membrane as a helical segment. Residues 467–502 (ERNFGGYRSAVTDYVLCLLNSTDNGIECHTSGPSYN) lie on the Extracellular side of the membrane. Residue asparagine 486 is glycosylated (N-linked (GlcNAc...) asparagine). The helical transmembrane segment at 503–523 (PYFMFYFFMRFFGILFFLIYG) threads the bilayer. Topologically, residues 524-574 (TSKNARDSWYELFIKIKVSLSETSSTISNNSGGGSSQQKQQQQNEIKLEKI) are cytoplasmic. Low complexity predominate over residues 550-568 (ISNNSGGGSSQQKQQQQNE). The interval 550-574 (ISNNSGGGSSQQKQQQQNEIKLEKI) is disordered.

It belongs to the G-protein coupled receptor Fz/Smo family.

Its subcellular location is the membrane. The polypeptide is Frizzled and smoothened-like protein G (fslG) (Dictyostelium discoideum (Social amoeba)).